Reading from the N-terminus, the 349-residue chain is MGEEKYLPELMAEKDSLDPSFVHASRLLAEEIEKFQGSDGKKEDEEKKYLDVISNKNIKLSERVLIPVKQYPKFNFVGKLLGPRGNSLKRLQEETGAKMSILGKGSMRDKTKEEELRKSGEAKYAHLSDELHVLIEVFAPPGEAYSRMSHALEEIKKFLVPDYNDEIRQEQLRELSYLNGSEESGRGRGIRGRGIRITPTAPSRGRGGAVPPPPPPGRGVLTPRGTTVTRGALPVPPIARGVPTPRARGTAAVPGYRAPPPPAHDAYEEYGYDDGYGGEYDDQTYEAYDNSYVTPTQSVPEYYDYGHGVNEDAYDSYAPEEWATTRSSLKAPPPRSARGGYREHPYGRY.

The KH domain occupies 65-135 (LIPVKQYPKF…HLSDELHVLI (71 aa)). Disordered stretches follow at residues 181–263 (SEES…PPPA) and 321–349 (EWATTRSSLKAPPPRSARGGYREHPYGRY). Residues 218 to 231 (RGVLTPRGTTVTRG) show a composition bias toward low complexity. Arg230 and Arg240 each carry omega-N-methylarginine. Residues 340–349 (GYREHPYGRY) are compositionally biased toward basic and acidic residues.

It belongs to the KHDRBS family. Self-associates to form homooligomers. Interacts with KHDRBS1/SAM68; heterooligomer formation of KHDRBS family proteins may modulate RNA substrate specificity. Interacts with RBMX, SAFB, SFRS9 and YTHDC1. Interacts with FYN and PLCG1 (via SH3 domain). Interacts (phosphorylated) with FYN, GRB2, PLCG1 and RASA1 (via SH2 domain). In terms of processing, methylated. Tyrosine phosphorylated by FYN, PTK6 and SRC. Tyrosine phosphorylated by SRC during mitosis. As to expression, expressed in heart, skin, brain, colon, spleen, kidney, cervix and testis. In adult cerebellum expressed predominantly in Purkinje cells and in the hippocampus is abundantly expressed in glutamatergic dentate granule cells and in specific inhibitory Schaffer collateral-associated and path-associated interneurons; expression is restricted to neuronal subpopulations largely non-overlapping with expression of KHDRBS3/SLM-2 (at protein level).

It localises to the nucleus. Functionally, RNA-binding protein that plays a role in the regulation of alternative splicing and influences mRNA splice site selection and exon inclusion. Binds both poly(A) and poly(U) homopolymers. Phosphorylation by PTK6 inhibits its RNA-binding ability. Induces an increased concentration-dependent incorporation of exon in CD44 pre-mRNA by direct binding to purine-rich exonic enhancer. Can regulate alternative splicing of neurexins NRXN1-3 in the laminin G-like domain 6 containing the evolutionary conserved neurexin alternative spliced segment 4 (AS4) involved in neurexin selective targeting to postsynaptic partners. Regulates cell-type specific alternative splicing of NRXN1 at AS4 and acts synergystically with SAM68 in exon skipping. In contrast acts antagonistically with SAM68 in NRXN3 exon skipping at AS4. Its phosphorylation by FYN inhibits its ability to regulate splice site selection. May function as an adapter protein for Src kinases during mitosis. The polypeptide is KH domain-containing, RNA-binding, signal transduction-associated protein 2 (Khdrbs2) (Mus musculus (Mouse)).